The chain runs to 370 residues: MAELTIPADLKPRDGRFGSGPSKVRPEQLQALAAAGDLFGTSHRQAPVKNLVGRVRDGIKQLFSVPEGYDVILGNGGSTAFWDAAAFGLIDKRSLHLTYGEFSAKFASAVAKNPFVGDPIVVKADPGSAPEPQSDPSVDVIAWAHNETSTGVAVPVQRPADSGDALIVIDATSGAGGLPVDIAQADAYYFAPQKNFAGDGGLWLAVVSPAALARIEAIGQSGRWVPDFLSLPIAVENSLKNQTYNTPAIGTLVLLADQLDWLNGNGGLDWAVKRTADSSQRLYSWAEASSYATPFVTDPALRSQVVGTIDFADDVDAAAVAKVLRANGIVDTEPYRKLGRNQLRVAMFAAVDPEDVSALTRCVDWVVERL.

The segment at 1-22 is disordered; sequence MAELTIPADLKPRDGRFGSGPS. Residue arginine 44 participates in L-glutamate binding. The pyridoxal 5'-phosphate site is built by phenylalanine 102, threonine 148, aspartate 170, and glutamine 193. At lysine 194 the chain carries N6-(pyridoxal phosphate)lysine. Pyridoxal 5'-phosphate is bound at residue 245–246; the sequence is NT.

It belongs to the class-V pyridoxal-phosphate-dependent aminotransferase family. SerC subfamily. As to quaternary structure, homodimer. The cofactor is pyridoxal 5'-phosphate.

Its subcellular location is the cytoplasm. The catalysed reaction is O-phospho-L-serine + 2-oxoglutarate = 3-phosphooxypyruvate + L-glutamate. The enzyme catalyses 4-(phosphooxy)-L-threonine + 2-oxoglutarate = (R)-3-hydroxy-2-oxo-4-phosphooxybutanoate + L-glutamate. It functions in the pathway amino-acid biosynthesis; L-serine biosynthesis; L-serine from 3-phospho-D-glycerate: step 2/3. It participates in cofactor biosynthesis; pyridoxine 5'-phosphate biosynthesis; pyridoxine 5'-phosphate from D-erythrose 4-phosphate: step 3/5. Catalyzes the reversible conversion of 3-phosphohydroxypyruvate to phosphoserine and of 3-hydroxy-2-oxo-4-phosphonooxybutanoate to phosphohydroxythreonine. This chain is Putative phosphoserine aminotransferase, found in Mycobacterium sp. (strain JLS).